The following is a 457-amino-acid chain: B-cell linker protein (457 aa).

A disordered region spans residues I36–Q306. The segment covering P57–N74 has biased composition (acidic residues). A phosphotyrosine; by SYK mark is found at Y72, Y84, Y96, Y178, and Y189. Positions L172–E187 are enriched in acidic residues. Positions N207 to H218 are enriched in polar residues. Residues C272–D290 are compositionally biased toward basic and acidic residues. In terms of domain architecture, SH2 spans W347 to V454.

Associates with PLCG1, VAV1 and NCK1 in a B-cell antigen receptor-dependent fashion. Interacts with VAV3, PLCG2 and GRB2. Interacts through its SH2 domain with CD79A. Interacts (via SH2 domain) with SYK; phosphorylated and activated by SYK. Interacts (via SH2 domain) with SCIMP; this interaction is dependent on phosphorylation of SCIMP 'Tyr-120'. In terms of processing, following BCR activation, phosphorylated on tyrosine residues by SYK and LYN. When phosphorylated, serves as a scaffold to assemble downstream targets of antigen activation, including PLCG1, VAV1, GRB2 and NCK1. Phosphorylation of Tyr-84, Tyr-178 and Tyr-189 facilitates PLCG1 binding. Phosphorylation of Tyr-72 facilitates VAV1 and NCK1 binding. Phosphorylation is required for both Ca(2+) and MAPK signaling pathways. Phosphorylation of Tyr-96 is required for the binding of BTK. Expressed in the spleen and weakly in thymus, no expression was seen in liver, testis, or brain. Expressed in B-cell lines representing different developmental stages from the pre-B to the plasma cell stage, but not in a T-cell or a fibroblast cell line.

The protein localises to the cytoplasm. It localises to the cell membrane. Its function is as follows. Functions as a central linker protein, downstream of the B-cell receptor (BCR), bridging the SYK kinase to a multitude of signaling pathways and regulating biological outcomes of B-cell function and development. Plays a role in the activation of ERK/EPHB2, MAP kinase p38 and JNK. Modulates AP1 activation. Important for the activation of NF-kappa-B and NFAT. Plays an important role in BCR-mediated PLCG1 and PLCG2 activation and Ca(2+) mobilization and is required for trafficking of the BCR to late endosomes. However, does not seem to be required for pre-BCR-mediated activation of MAP kinase and phosphatidyl-inositol 3 (PI3) kinase signaling. May be required for the RAC1-JNK pathway. Plays a critical role in orchestrating the pro-B cell to pre-B cell transition. May play an important role in BCR-induced B-cell apoptosis. The sequence is that of B-cell linker protein (Blnk) from Mus musculus (Mouse).